The sequence spans 276 residues: Glutamate 5-kinase (276 aa).

Residue Lys-14 coordinates ATP. Substrate-binding residues include Ser-54, Asp-141, and Asn-157. ATP is bound by residues 177 to 178 and 219 to 225; these read SD and TGGMLTK.

The protein belongs to the glutamate 5-kinase family.

Its subcellular location is the cytoplasm. It carries out the reaction L-glutamate + ATP = L-glutamyl 5-phosphate + ADP. Its pathway is amino-acid biosynthesis; L-proline biosynthesis; L-glutamate 5-semialdehyde from L-glutamate: step 1/2. In terms of biological role, catalyzes the transfer of a phosphate group to glutamate to form L-glutamate 5-phosphate. The chain is Glutamate 5-kinase from Listeria monocytogenes serotype 4b (strain CLIP80459).